The sequence spans 345 residues: Methionine import ATP-binding protein MetN (345 aa).

The ABC transporter domain occupies 2 to 241; the sequence is IKLNNITKIF…PKTELAQEFI (240 aa). 38–45 is a binding site for ATP; sequence GASGAGKS.

This sequence belongs to the ABC transporter superfamily. Methionine importer (TC 3.A.1.24) family. In terms of assembly, the complex is composed of two ATP-binding proteins (MetN), two transmembrane proteins (MetI) and a solute-binding protein (MetQ).

The protein resides in the cell inner membrane. The catalysed reaction is L-methionine(out) + ATP + H2O = L-methionine(in) + ADP + phosphate + H(+). The enzyme catalyses D-methionine(out) + ATP + H2O = D-methionine(in) + ADP + phosphate + H(+). Functionally, part of the ABC transporter complex MetNIQ involved in methionine import. Responsible for energy coupling to the transport system. The polypeptide is Methionine import ATP-binding protein MetN (Haemophilus influenzae (strain 86-028NP)).